We begin with the raw amino-acid sequence, 429 residues long: Serine--tRNA ligase (429 aa).

An L-serine-binding site is contributed by Thr-235–Glu-237. Arg-266–Glu-268 lines the ATP pocket. Glu-289 serves as a coordination point for L-serine. An ATP-binding site is contributed by Glu-353–Ser-356. Residue Ser-389 coordinates L-serine.

The protein belongs to the class-II aminoacyl-tRNA synthetase family. Type-1 seryl-tRNA synthetase subfamily. As to quaternary structure, homodimer. The tRNA molecule binds across the dimer.

It localises to the cytoplasm. It carries out the reaction tRNA(Ser) + L-serine + ATP = L-seryl-tRNA(Ser) + AMP + diphosphate + H(+). The enzyme catalyses tRNA(Sec) + L-serine + ATP = L-seryl-tRNA(Sec) + AMP + diphosphate + H(+). It functions in the pathway aminoacyl-tRNA biosynthesis; selenocysteinyl-tRNA(Sec) biosynthesis; L-seryl-tRNA(Sec) from L-serine and tRNA(Sec): step 1/1. Catalyzes the attachment of serine to tRNA(Ser). Is also able to aminoacylate tRNA(Sec) with serine, to form the misacylated tRNA L-seryl-tRNA(Sec), which will be further converted into selenocysteinyl-tRNA(Sec). This chain is Serine--tRNA ligase, found in Histophilus somni (strain 129Pt) (Haemophilus somnus).